A 103-amino-acid polypeptide reads, in one-letter code: Large ribosomal subunit protein uL24 (103 aa).

It belongs to the universal ribosomal protein uL24 family. Part of the 50S ribosomal subunit.

One of two assembly initiator proteins, it binds directly to the 5'-end of the 23S rRNA, where it nucleates assembly of the 50S subunit. Functionally, one of the proteins that surrounds the polypeptide exit tunnel on the outside of the subunit. In Christiangramia forsetii (strain DSM 17595 / CGMCC 1.15422 / KT0803) (Gramella forsetii), this protein is Large ribosomal subunit protein uL24.